Reading from the N-terminus, the 483-residue chain is Cobyric acid synthase (483 aa).

The GATase cobBQ-type domain occupies 251 to 438; that stretch reads SLVVAVPMLP…LHGVFNADEF (188 aa). The active-site Nucleophile is the Cys-333. His-430 is an active-site residue.

Belongs to the CobB/CobQ family. CobQ subfamily.

Its pathway is cofactor biosynthesis; adenosylcobalamin biosynthesis. Catalyzes amidations at positions B, D, E, and G on adenosylcobyrinic A,C-diamide. NH(2) groups are provided by glutamine, and one molecule of ATP is hydrogenolyzed for each amidation. The protein is Cobyric acid synthase of Brucella anthropi (strain ATCC 49188 / DSM 6882 / CCUG 24695 / JCM 21032 / LMG 3331 / NBRC 15819 / NCTC 12168 / Alc 37) (Ochrobactrum anthropi).